Reading from the N-terminus, the 117-residue chain is Immunoglobulin heavy variable 3-7 (117 aa).

The signal sequence occupies residues 1-19 (MELGLSWVFLVAILEGVQC). Residues 20–44 (EVQLVESGGGLVQPGGSLRLSCAAS) form a framework-1 region. An Ig-like domain is found at 20 to 117 (EVQLVESGGG…EDTAVYYCAR (98 aa)). A disulfide bridge connects residues cysteine 41 and cysteine 115. The interval 45–52 (GFTFSSYW) is complementarity-determining-1. Positions 53 to 69 (MSWVRQAPGKGLEWVAN) are framework-2. Residues 70–77 (IKQDGSEK) are complementarity-determining-2. The interval 78–115 (YYVDSVKGRFTISRDNAKNSLYLQMNSLRAEDTAVYYC) is framework-3. The interval 116–117 (AR) is complementarity-determining-3.

Immunoglobulins are composed of two identical heavy chains and two identical light chains; disulfide-linked.

It localises to the secreted. It is found in the cell membrane. In terms of biological role, v region of the variable domain of immunoglobulin heavy chains that participates in the antigen recognition. Immunoglobulins, also known as antibodies, are membrane-bound or secreted glycoproteins produced by B lymphocytes. In the recognition phase of humoral immunity, the membrane-bound immunoglobulins serve as receptors which, upon binding of a specific antigen, trigger the clonal expansion and differentiation of B lymphocytes into immunoglobulins-secreting plasma cells. Secreted immunoglobulins mediate the effector phase of humoral immunity, which results in the elimination of bound antigens. The antigen binding site is formed by the variable domain of one heavy chain, together with that of its associated light chain. Thus, each immunoglobulin has two antigen binding sites with remarkable affinity for a particular antigen. The variable domains are assembled by a process called V-(D)-J rearrangement and can then be subjected to somatic hypermutations which, after exposure to antigen and selection, allow affinity maturation for a particular antigen. This is Immunoglobulin heavy variable 3-7 from Homo sapiens (Human).